A 74-amino-acid chain; its full sequence is Protein SlyX homolog (74 aa).

Belongs to the SlyX family.

The sequence is that of Protein SlyX homolog from Aliivibrio fischeri (strain ATCC 700601 / ES114) (Vibrio fischeri).